The sequence spans 295 residues: Methionine aminopeptidase (295 aa).

His-63 is a binding site for substrate. The a divalent metal cation site is built by Asp-83, Asp-94, and His-154. Position 162 (His-162) interacts with substrate. Residues Glu-188 and Glu-281 each contribute to the a divalent metal cation site.

This sequence belongs to the peptidase M24A family. Methionine aminopeptidase archaeal type 2 subfamily. In terms of assembly, monomer. The cofactor is Fe(2+). It depends on Co(2+) as a cofactor. Ni(2+) is required as a cofactor. Mn(2+) serves as cofactor.

It catalyses the reaction Release of N-terminal amino acids, preferentially methionine, from peptides and arylamides.. In terms of biological role, removes the N-terminal methionine from nascent proteins. The N-terminal methionine is often cleaved when the second residue in the primary sequence is small and uncharged (Met-Ala-, Cys, Gly, Pro, Ser, Thr, or Val). The protein is Methionine aminopeptidase of Thermococcus onnurineus (strain NA1).